A 473-amino-acid chain; its full sequence is 3-isopropylmalate dehydratase large subunit (473 aa).

The segment at 289–319 (TVTWGTTPGQTAGITEPIPDPDDLPEEDRDT) is disordered. Residues 291–301 (TWGTTPGQTAG) are compositionally biased toward polar residues. Residues 307–317 (PDPDDLPEEDR) are compositionally biased toward acidic residues. 3 residues coordinate [4Fe-4S] cluster: cysteine 348, cysteine 408, and cysteine 411.

It belongs to the aconitase/IPM isomerase family. LeuC type 1 subfamily. In terms of assembly, heterodimer of LeuC and LeuD. [4Fe-4S] cluster serves as cofactor.

It catalyses the reaction (2R,3S)-3-isopropylmalate = (2S)-2-isopropylmalate. It participates in amino-acid biosynthesis; L-leucine biosynthesis; L-leucine from 3-methyl-2-oxobutanoate: step 2/4. Catalyzes the isomerization between 2-isopropylmalate and 3-isopropylmalate, via the formation of 2-isopropylmaleate. The sequence is that of 3-isopropylmalate dehydratase large subunit from Halorubrum lacusprofundi (strain ATCC 49239 / DSM 5036 / JCM 8891 / ACAM 34).